A 257-amino-acid chain; its full sequence is Hydroxyethylthiazole kinase (257 aa).

Met49 lines the substrate pocket. The ATP site is built by Arg124 and Thr170. Substrate is bound at residue Gly197.

The protein belongs to the Thz kinase family. Mg(2+) serves as cofactor.

It carries out the reaction 5-(2-hydroxyethyl)-4-methylthiazole + ATP = 4-methyl-5-(2-phosphooxyethyl)-thiazole + ADP + H(+). It functions in the pathway cofactor biosynthesis; thiamine diphosphate biosynthesis; 4-methyl-5-(2-phosphoethyl)-thiazole from 5-(2-hydroxyethyl)-4-methylthiazole: step 1/1. In terms of biological role, catalyzes the phosphorylation of the hydroxyl group of 4-methyl-5-beta-hydroxyethylthiazole (THZ). This Klebsiella pneumoniae subsp. pneumoniae (strain ATCC 700721 / MGH 78578) protein is Hydroxyethylthiazole kinase.